A 134-amino-acid chain; its full sequence is Outer membrane lipoprotein RcsF (134 aa).

The signal sequence occupies residues 1–15; that stretch reads MRALPICLVALMLSG. Cys16 is lipidated: N-palmitoyl cysteine. Cys16 is lipidated: S-diacylglycerol cysteine. 2 disordered regions span residues 22–48 and 67–88; these read SPVE…RATP and GEVS…IPTA. Polar residues predominate over residues 72-82; sequence DSCQASNQDSP. Cystine bridges form between Cys74-Cys118 and Cys109-Cys124.

The protein belongs to the RcsF family.

The protein localises to the cell outer membrane. Functionally, essential component of the Rcs signaling system, which controls transcription of numerous genes. Plays a role in signal transduction from the cell surface to the histidine kinase RcsC. May detect outer membrane defects. In Escherichia coli O6:H1 (strain CFT073 / ATCC 700928 / UPEC), this protein is Outer membrane lipoprotein RcsF.